A 387-amino-acid chain; its full sequence is Small ribosomal subunit biogenesis GTPase RsgA (387 aa).

Positions 112–273 (YDGLKPVAAN…LIDSPGVREF (162 aa)) constitute a CP-type G domain. GTP-binding positions include 159–162 (NKID) and 213–221 (GQSGVGKSS). Residues cysteine 297, cysteine 302, histidine 304, and cysteine 310 each coordinate Zn(2+).

Belongs to the TRAFAC class YlqF/YawG GTPase family. RsgA subfamily. Monomer. Associates with 30S ribosomal subunit, binds 16S rRNA. The cofactor is Zn(2+).

It is found in the cytoplasm. Functionally, one of several proteins that assist in the late maturation steps of the functional core of the 30S ribosomal subunit. Helps release RbfA from mature subunits. May play a role in the assembly of ribosomal proteins into the subunit. Circularly permuted GTPase that catalyzes slow GTP hydrolysis, GTPase activity is stimulated by the 30S ribosomal subunit. The chain is Small ribosomal subunit biogenesis GTPase RsgA from Vibrio cholerae serotype O1 (strain ATCC 39315 / El Tor Inaba N16961).